The sequence spans 301 residues: tRNA dimethylallyltransferase (301 aa).

Position 5-12 (5-12) interacts with ATP; that stretch reads GPTASGKS. 7–12 is a substrate binding site; that stretch reads TASGKS. Residues 30–33 form an interaction with substrate tRNA region; the sequence is DSMQ.

It belongs to the IPP transferase family. As to quaternary structure, monomer. Mg(2+) is required as a cofactor.

It catalyses the reaction adenosine(37) in tRNA + dimethylallyl diphosphate = N(6)-dimethylallyladenosine(37) in tRNA + diphosphate. Catalyzes the transfer of a dimethylallyl group onto the adenine at position 37 in tRNAs that read codons beginning with uridine, leading to the formation of N6-(dimethylallyl)adenosine (i(6)A). In Rhodopseudomonas palustris (strain TIE-1), this protein is tRNA dimethylallyltransferase.